Reading from the N-terminus, the 730-residue chain is Translation initiation factor IF-2 (730 aa).

Positions 48–151 (GNGNQKQGGS…NKAKPLPEKV (104 aa)) are disordered. Basic and acidic residues-rich tracts occupy residues 61-77 (EQQKKAGEKKPAQDHGQ) and 89-104 (NQHDRSQGSDQQKGKA). A compositionally biased stretch (basic residues) spans 110–123 (KPKHKGNKNKKQHQ). The segment covering 137 to 148 (RQPEMNKAKPLP) has biased composition (basic and acidic residues). The region spanning 231 to 400 (ERPPVVTIMG…LLVAEVEELK (170 aa)) is the tr-type G domain. The tract at residues 240 to 247 (GHVDHGKT) is G1. 240-247 (GHVDHGKT) is a binding site for GTP. The tract at residues 265 to 269 (GITQH) is G2. The segment at 286–289 (DTPG) is G3. GTP contacts are provided by residues 286–290 (DTPGH) and 340–343 (NKMD). A G4 region spans residues 340–343 (NKMD). The G5 stretch occupies residues 376 to 378 (SAL).

Belongs to the TRAFAC class translation factor GTPase superfamily. Classic translation factor GTPase family. IF-2 subfamily.

The protein localises to the cytoplasm. In terms of biological role, one of the essential components for the initiation of protein synthesis. Protects formylmethionyl-tRNA from spontaneous hydrolysis and promotes its binding to the 30S ribosomal subunits. Also involved in the hydrolysis of GTP during the formation of the 70S ribosomal complex. The sequence is that of Translation initiation factor IF-2 from Halalkalibacterium halodurans (strain ATCC BAA-125 / DSM 18197 / FERM 7344 / JCM 9153 / C-125) (Bacillus halodurans).